The sequence spans 176 residues: 2-C-methyl-D-erythritol 2,4-cyclodiphosphate synthase (176 aa).

A divalent metal cation is bound by residues Asp23, His25, and His60. 23-25 is a 4-CDP-2-C-methyl-D-erythritol 2-phosphate binding site; sequence DSH. 149–152 contributes to the 4-CDP-2-C-methyl-D-erythritol 2-phosphate binding site; the sequence is TSGE.

The protein belongs to the IspF family. In terms of assembly, homotrimer. The cofactor is a divalent metal cation.

It catalyses the reaction 4-CDP-2-C-methyl-D-erythritol 2-phosphate = 2-C-methyl-D-erythritol 2,4-cyclic diphosphate + CMP. It functions in the pathway isoprenoid biosynthesis; isopentenyl diphosphate biosynthesis via DXP pathway; isopentenyl diphosphate from 1-deoxy-D-xylulose 5-phosphate: step 4/6. Functionally, involved in the biosynthesis of isopentenyl diphosphate (IPP) and dimethylallyl diphosphate (DMAPP), two major building blocks of isoprenoid compounds. Catalyzes the conversion of 4-diphosphocytidyl-2-C-methyl-D-erythritol 2-phosphate (CDP-ME2P) to 2-C-methyl-D-erythritol 2,4-cyclodiphosphate (ME-CPP) with a corresponding release of cytidine 5-monophosphate (CMP). The polypeptide is 2-C-methyl-D-erythritol 2,4-cyclodiphosphate synthase (Chlamydia abortus (strain DSM 27085 / S26/3) (Chlamydophila abortus)).